A 603-amino-acid chain; its full sequence is Protein regulator of cytokinesis 1 (603 aa).

A dimerization region spans residues 1–341; sequence MRRSEVLADE…HLHDAEIVRL (341 aa). Coiled-coil stretches lie at residues 34-65, 96-136, 211-246, 272-304, and 383-463; these read EQRL…RERL, ILQL…DILC, SLEN…IREL, RNAL…LAQF, and GNLL…AEML. Positions 342 to 466 are spectrin-fold; that stretch reads RNYYDVHKEL…QTEAEMLYGS (125 aa). Residues 447–459 are compositionally biased toward basic and acidic residues; it reads KQERQLKNKKQTE. Residues 447–502 are disordered; sequence KQERQLKNKKQTEAEMLYGSTPRTPSKRPGQTPKKSGKMNTTTMSSATPNSSIRPV. Residues 467–603 are unstructured, Arg/Lys rich; it reads TPRTPSKRPG…RILNSTNIQS (137 aa). At threonine 470 the chain carries Phosphothreonine; by CDK1. Positions 484-499 are enriched in polar residues; that stretch reads KMNTTTMSSATPNSSI. A phosphoserine mark is found at serine 510 and serine 568. Threonine 575 bears the Phosphothreonine mark. Residues 583-603 form a disordered region; the sequence is LSKASRSDATSRILNSTNIQS. Over residues 589 to 603 the composition is skewed to polar residues; it reads SDATSRILNSTNIQS. Threonine 599 is subject to Phosphothreonine; by PLK1.

It belongs to the MAP65/ASE1 family. Homodimer. Interacts with the C-terminal Rho-GAP domain and the basic region of RACGAP1. The interaction with RACGAP1 inhibits its GAP activity towards CDC42 in vitro, which may be required for maintaining normal spindle morphology. Interacts (via N-terminus) with the C-terminus of CENPE (via C-terminus); the interaction occurs during late mitosis. Interacts (via N-terminus) with KIF4A (via C-terminus); the interaction is required for the progression of mitosis. Interacts (via N-terminus) with KIF23 (via C-terminus); the interaction occurs during late mitosis. Interacts with KIF14 and KIF20A. Interacts with PLK1. Interacts with KIF20B. Interacts with CCDC66. In terms of processing, phosphorylation by CDK1 in early mitosis holds PRC1 in an inactive monomeric state, during the metaphase to anaphase transition, PRC1 is dephosphorylated, promoting interaction with KIF4A, which then translocates PRC1 along mitotic spindles to the plus ends of antiparallel interdigitating microtubules. Dephosphorylation also promotes MT-bundling activity by allowing dimerization. Phosphorylation by CDK1 prevents PLK1-binding: upon degradation of CDK1 at anaphase and dephosphorylation, it is then phosphorylated by PLK1, leading to cytokinesis.

It is found in the nucleus. The protein resides in the cytoplasm. It localises to the cytoskeleton. Its subcellular location is the spindle pole. The protein localises to the midbody. Key regulator of cytokinesis that cross-links antiparrallel microtubules at an average distance of 35 nM. Essential for controlling the spatiotemporal formation of the midzone and successful cytokinesis. Required for KIF14 localization to the central spindle and midbody. Required to recruit PLK1 to the spindle. Stimulates PLK1 phosphorylation of RACGAP1 to allow recruitment of ECT2 to the central spindle. Acts as an oncogene for promoting bladder cancer cells proliferation, apoptosis inhibition and carcinogenic progression. This chain is Protein regulator of cytokinesis 1, found in Mus musculus (Mouse).